Consider the following 266-residue polypeptide: Interleukin-1 beta (266 aa).

Positions 1-114 (MAAVPELSSE…DTWDEEYESD (114 aa)) are excised as a propeptide.

Belongs to the IL-1 family. Monomer. In its precursor form, weakly interacts with full-length MEFV; the mature cytokine does not interact at all. Interacts with integrins ITGAV:ITGBV and ITGA5:ITGB1; integrin-binding is required for IL1B signaling. Interacts with cargo receptor TMED10; the interaction is direct and is required for the secretion of IL1B mature form. Interacts with HSP90AB1; the interaction facilitates cargo translocation into the ERGIC. Interacts with HSP90B1; the interaction facilitates cargo translocation into the ERGIC.

It is found in the cytoplasm. The protein resides in the cytosol. The protein localises to the secreted. It localises to the lysosome. Its subcellular location is the extracellular exosome. Potent pro-inflammatory cytokine. Initially discovered as the major endogenous pyrogen, induces prostaglandin synthesis, neutrophil influx and activation, T-cell activation and cytokine production, B-cell activation and antibody production, and fibroblast proliferation and collagen production. Promotes Th17 differentiation of T-cells. Synergizes with IL12/interleukin-12 to induce IFNG synthesis from T-helper 1 (Th1) cells. Plays a role in angiogenesis by inducing VEGF production synergistically with TNF and IL6. Involved in transduction of inflammation downstream of pyroptosis: its mature form is specifically released in the extracellular milieu by passing through the gasdermin-D (GSDMD) pore. This is Interleukin-1 beta (IL1B) from Cavia porcellus (Guinea pig).